The primary structure comprises 897 residues: Translation initiation factor IF-2 (897 aa).

A disordered region spans residues 52–310 (EHGSAPDKLT…LLQQGFQKPA (259 aa)). The span at 68–82 (STLNVPGTGGKSKSV) shows a compositional bias: polar residues. 2 stretches are compositionally biased toward basic and acidic residues: residues 85–159 (EVRK…KDKV) and 166–217 (EMTK…ENEK). Residues 256 to 272 (GRTRTASKTARPQKKGN) show a composition bias toward basic residues. Basic and acidic residues predominate over residues 273-286 (KHAESKADREEARA). The tr-type G domain maps to 396–565 (PRAPVVTIMG…LLQAEVLELK (170 aa)). Residues 405-412 (GHVDHGKT) are G1. GTP is bound at residue 405-412 (GHVDHGKT). A G2 region spans residues 430–434 (GITQH). The G3 stretch occupies residues 451–454 (DTPG). Residues 451 to 455 (DTPGH) and 505 to 508 (NKID) contribute to the GTP site. The tract at residues 505 to 508 (NKID) is G4. A G5 region spans residues 541–543 (SAK).

The protein belongs to the TRAFAC class translation factor GTPase superfamily. Classic translation factor GTPase family. IF-2 subfamily.

It is found in the cytoplasm. One of the essential components for the initiation of protein synthesis. Protects formylmethionyl-tRNA from spontaneous hydrolysis and promotes its binding to the 30S ribosomal subunits. Also involved in the hydrolysis of GTP during the formation of the 70S ribosomal complex. The protein is Translation initiation factor IF-2 (infB) of Enterobacter cloacae.